The primary structure comprises 261 residues: Pyrroline-5-carboxylate reductase (261 aa).

The protein belongs to the pyrroline-5-carboxylate reductase family.

The protein resides in the cytoplasm. It catalyses the reaction L-proline + NADP(+) = (S)-1-pyrroline-5-carboxylate + NADPH + 2 H(+). The catalysed reaction is L-proline + NAD(+) = (S)-1-pyrroline-5-carboxylate + NADH + 2 H(+). The protein operates within amino-acid biosynthesis; L-proline biosynthesis; L-proline from L-glutamate 5-semialdehyde: step 1/1. Catalyzes the reduction of 1-pyrroline-5-carboxylate (PCA) to L-proline. This is Pyrroline-5-carboxylate reductase from Thermus thermophilus (strain ATCC BAA-163 / DSM 7039 / HB27).